Reading from the N-terminus, the 301-residue chain is MATPTESELASPIPQTNPGSYEELHRKARDVFPTCFEGAKLMVNKGLSSHFQVSHTLSLSAMNTGYRFGATYVGTNQVGPAEAYPILLGDTDVNGNTTATILHQLGIYRTKLQGQIQQGKLAGAQATIERKGRLSTLGLTLANIDLVNEAGILVGQFLRRLTPRLDVGTEMVYQYGKNIPGGQISVLSYAARYTANHFIAAATLGASGVHLTYYHKQNENLAFGVEFECNANVGEAVTTLAYQTELPEEGVTMRASFDTNWTVGGVFEKRLSQQLPFTLALSGTLNHVKAAGKFGIGLIIG.

The segment covering 1–19 (MATPTESELASPIPQTNPG) has biased composition (polar residues). The interval 1–20 (MATPTESELASPIPQTNPGS) is disordered.

It belongs to the Tom40 family. Forms part of the preprotein translocase complex of the outer mitochondrial membrane (TOM complex). Interacts with mitochondrial targeting sequences. Ubiquitously expressed, but highly expressed in the pharyngeal muscles, the nerve ring, the intestine, gonadal sheath and in the tail hypodermis.

The protein resides in the mitochondrion outer membrane. Functionally, channel-forming protein essential for import of protein precursors into mitochondria. Specifically required for nnt-1 accumulation in the mitochondria and may be involved in the secretion of daf-28/insulin from the mitochondria. Required for embryonic and larval development. The polypeptide is Mitochondrial import receptor subunit TOM40 homolog (Caenorhabditis elegans).